Here is a 391-residue protein sequence, read N- to C-terminus: Glycerophosphocholine acyltransferase 1 (391 aa).

The Cytoplasmic portion of the chain corresponds to 1–66; that stretch reads MSNNEDPINE…IAKQAEEHES (66 aa). A helical membrane pass occupies residues 67–87; that stretch reads FINKVTHLLGVLGFGGFCFLL. Residues 88–92 are Lumenal-facing; that stretch reads GARPQ. The chain crosses the membrane as a helical span at residues 93–113; the sequence is DIPYVYCLFFFIFVPLRWIYY. Residues 114 to 119 lie on the Cytoplasmic side of the membrane; the sequence is RFKKWH. A helical membrane pass occupies residues 120 to 140; that stretch reads YFLLDFCYYANTIFLVDLLLY. Residues 141 to 144 are Lumenal-facing; the sequence is PKDE. The chain crosses the membrane as a helical span at residues 145–165; sequence KLFMVCFSFAEGPLAWALIVW. Residues 166–172 are Cytoplasmic-facing; the sequence is RCSLVFS. Residues 173 to 193 form a helical membrane-spanning segment; it reads SVDKIVSVLIHLLPGLVFFTI. Over 194 to 226 the chain is Lumenal; that stretch reads RWWNPATFEAMHPEGTSGRASWPYVEDKSFLFT. The chain crosses the membrane as a helical span at residues 227 to 247; that stretch reads WLFLVPLVAYFLWQLLYFLIV. Residues 248-294 are Cytoplasmic-facing; it reads NVLRRQRLLRDPEVMTSYRELSKKAQKANNVWWRLSGLLGDQNRMLM. A helical transmembrane segment spans residues 295 to 315; the sequence is YILLQALFTVATTALTVPIFL. Residues 316–318 are Lumenal-facing; it reads SYE. Residues 319-339 traverse the membrane as a helical segment; the sequence is LHAVFQILKVSAAVWNGGSFL. The Cytoplasmic portion of the chain corresponds to 340–391; it reads LDVMPRQVILKEKKKSELQPAHIQQYHSEPKQDQSPNSMEIRMKTIHSAEEQ. The segment at 354–391 is disordered; it reads KSELQPAHIQQYHSEPKQDQSPNSMEIRMKTIHSAEEQ. The segment covering 380–391 has biased composition (basic and acidic residues); sequence IRMKTIHSAEEQ.

Belongs to the GPC1 family.

Its subcellular location is the membrane. It catalyses the reaction sn-glycerol 3-phosphocholine + an acyl-CoA = a monoacyl-sn-glycero-3-phosphocholine + CoA. The catalysed reaction is sn-glycero-3-phosphoethanolamine + an acyl-CoA = a monoacyl-sn-glycero-3-phosphoethanolamine + CoA. The enzyme catalyses sn-glycerol 3-phosphocholine + hexadecanoyl-CoA = hexadecanoyl-sn-glycero-3-phosphocholine + CoA. It carries out the reaction (9Z)-hexadecenoyl-CoA + sn-glycerol 3-phosphocholine = (9Z-hexadecenoyl)-sn-glycero-3-phosphocholine + CoA. It catalyses the reaction (9Z,12Z)-octadecadienoyl-CoA + sn-glycerol 3-phosphocholine = (9Z,12Z-octadecadienoyl)-sn-glycero-3-phosphocholine + CoA. The catalysed reaction is (12R)-hydroxy-(9Z)-octadecenoyl-CoA + sn-glycerol 3-phosphocholine = (12R-hydroxy-9Z-octadecenoyl)-sn-glycero-3-phosphocholine + CoA. The enzyme catalyses (9Z,12Z,15Z)-octadecatrienoyl-CoA + sn-glycerol 3-phosphocholine = (9Z,12Z,15Z-octadecatrienoyl)-sn-glycero-3-phosphocholine + CoA. It carries out the reaction sn-glycerol 3-phosphocholine + (9Z)-octadecenoyl-CoA = (9Z-octadecenoyl)-sn-glycero-3-phosphocholine + CoA. Glycerophosphocholine acyltransferase (GPCAT) that utilizes acyl-CoA to acylate glycero-3-phosphocholine (GPC), forming lysophosphatidylcholine (LPC). Shows broad acyl specificities with a preference for 16:0-CoA, polyunsaturated acyl-CoA, and the hydroxylated ricinoleoyl-CoA. Also catalyzes the acylation of glycero-3-phosphoethanolamine (GPE) with acyl-CoA. In addition to acyl-CoA, GPCAT efficiently utilizes LPC and lysophosphatidylethanolamine (LPE) as acyl donors in the acylation of GPC. Contributes to the maintenance of phosphatidylcholine (PC) homeostasis and might also have specific functions in acyl editing of PC, such as transferring acyl groups modified at the sn-2 position of PC to the sn-1. The protein is Glycerophosphocholine acyltransferase 1 of Ricinus communis (Castor bean).